Consider the following 431-residue polypeptide: Adenylosuccinate synthetase (431 aa).

GTP contacts are provided by residues 12–18 (GDEGKGK) and 40–42 (GHT). Asp-13 (proton acceptor) is an active-site residue. Mg(2+)-binding residues include Asp-13 and Gly-40. Residues 13–16 (DEGK), 38–41 (NAGH), Thr-129, Arg-143, Gln-224, and Thr-239 each bind IMP. The active-site Proton donor is His-41. Lys-292 participates in a covalent cross-link: Isoglutamyl lysine isopeptide (Lys-Gln) (interchain with Q-Cter in protein Pup). 299–305 (VTTGRAR) provides a ligand contact to substrate. IMP is bound at residue Arg-303. GTP-binding positions include Arg-305, 331 to 333 (KLD), and 413 to 415 (GVG).

It belongs to the adenylosuccinate synthetase family. Homodimer. Requires Mg(2+) as cofactor.

It is found in the cytoplasm. It carries out the reaction IMP + L-aspartate + GTP = N(6)-(1,2-dicarboxyethyl)-AMP + GDP + phosphate + 2 H(+). Its pathway is purine metabolism; AMP biosynthesis via de novo pathway; AMP from IMP: step 1/2. Functionally, plays an important role in the de novo pathway of purine nucleotide biosynthesis. Catalyzes the first committed step in the biosynthesis of AMP from IMP. This chain is Adenylosuccinate synthetase, found in Mycolicibacterium smegmatis (strain ATCC 700084 / mc(2)155) (Mycobacterium smegmatis).